We begin with the raw amino-acid sequence, 494 residues long: 4-trimethylaminobutyraldehyde dehydrogenase (494 aa).

Ser-2 bears the N-acetylserine mark. Position 30 is an N6-acetyllysine; alternate (Lys-30). Position 30 is an N6-succinyllysine; alternate (Lys-30). At Lys-59 the chain carries N6-succinyllysine. NAD(+)-binding positions include Lys-180 and 232–236 (GSVPT). Residue Glu-254 is the Proton acceptor of the active site. Cys-288 acts as the Nucleophile in catalysis. Residue Lys-298 is modified to N6-acetyllysine. The residue at position 303 (Lys-303) is an N6-acetyllysine; alternate. Lys-303 carries the post-translational modification N6-succinyllysine; alternate. Lys-344 is modified (N6-acetyllysine). Residue Glu-391 coordinates NAD(+).

It belongs to the aldehyde dehydrogenase family. In terms of assembly, homotetramer.

The protein localises to the cytoplasm. It is found in the cytosol. The catalysed reaction is 4-(trimethylamino)butanal + NAD(+) + H2O = 4-(trimethylamino)butanoate + NADH + 2 H(+). The enzyme catalyses an aldehyde + NAD(+) + H2O = a carboxylate + NADH + 2 H(+). It catalyses the reaction 4-aminobutanal + NAD(+) + H2O = 4-aminobutanoate + NADH + 2 H(+). It carries out the reaction formaldehyde + NAD(+) + H2O = formate + NADH + 2 H(+). The catalysed reaction is acetaldehyde + NAD(+) + H2O = acetate + NADH + 2 H(+). The enzyme catalyses imidazole-4-acetaldehyde + NAD(+) + H2O = imidazole-4-acetate + NADH + 2 H(+). It catalyses the reaction acrolein + NAD(+) + H2O = acrylate + NADH + 2 H(+). It carries out the reaction (5-hydroxyindol-3-yl)acetaldehyde + NAD(+) + H2O = (5-hydroxyindol-3-yl)acetate + NADH + 2 H(+). The catalysed reaction is 3,4-dihydroxyphenylacetaldehyde + NAD(+) + H2O = 3,4-dihydroxyphenylacetate + NADH + 2 H(+). The enzyme catalyses spermine monoaldehyde + NAD(+) + H2O = N-(2-carboxyethyl)spermidine + NADH + 2 H(+). It catalyses the reaction propanal + NAD(+) + H2O = propanoate + NADH + 2 H(+). It carries out the reaction butanal + NAD(+) + H2O = butanoate + NADH + 2 H(+). The catalysed reaction is pentanal + NAD(+) + H2O = pentanoate + NADH + 2 H(+). The enzyme catalyses hexanal + NAD(+) + H2O = hexanoate + NADH + 2 H(+). The protein operates within amine and polyamine biosynthesis; carnitine biosynthesis. In terms of biological role, converts gamma-trimethylaminobutyraldehyde into gamma-butyrobetaine with high efficiency (in vitro). Can catalyze the irreversible oxidation of a broad range of aldehydes to the corresponding acids in an NAD-dependent reaction, but with low efficiency. Catalyzes the oxidation of aldehydes arising from biogenic amines and polyamines. This Mus musculus (Mouse) protein is 4-trimethylaminobutyraldehyde dehydrogenase.